The primary structure comprises 94 residues: Large ribosomal subunit protein uL23 (94 aa).

This sequence belongs to the universal ribosomal protein uL23 family. Part of the 50S ribosomal subunit. Contacts protein L29, and trigger factor when it is bound to the ribosome.

Functionally, one of the early assembly proteins it binds 23S rRNA. One of the proteins that surrounds the polypeptide exit tunnel on the outside of the ribosome. Forms the main docking site for trigger factor binding to the ribosome. This is Large ribosomal subunit protein uL23 from Listeria innocua serovar 6a (strain ATCC BAA-680 / CLIP 11262).